A 325-amino-acid polypeptide reads, in one-letter code: GMP reductase (325 aa).

C174 (thioimidate intermediate) is an active-site residue. 203-226 (LIADGGIRTHGDIAKSIRFGASMV) is an NADP(+) binding site.

Belongs to the IMPDH/GMPR family. GuaC type 2 subfamily.

It catalyses the reaction IMP + NH4(+) + NADP(+) = GMP + NADPH + 2 H(+). Its function is as follows. Catalyzes the irreversible NADPH-dependent deamination of GMP to IMP. It functions in the conversion of nucleobase, nucleoside and nucleotide derivatives of G to A nucleotides, and in maintaining the intracellular balance of A and G nucleotides. The chain is GMP reductase from Staphylococcus aureus (strain MRSA252).